We begin with the raw amino-acid sequence, 122 residues long: ATP-dependent Clp protease adapter protein ClpS (122 aa).

The tract at residues 1–33 is disordered; sequence MHAPSQIRLTFNQDHPEPHEHEDEGAGLAVQES. Basic and acidic residues predominate over residues 14-24; that stretch reads DHPEPHEHEDE.

It belongs to the ClpS family. As to quaternary structure, binds to the N-terminal domain of the chaperone ClpA.

Functionally, involved in the modulation of the specificity of the ClpAP-mediated ATP-dependent protein degradation. The sequence is that of ATP-dependent Clp protease adapter protein ClpS from Pseudomonas aeruginosa (strain ATCC 15692 / DSM 22644 / CIP 104116 / JCM 14847 / LMG 12228 / 1C / PRS 101 / PAO1).